Reading from the N-terminus, the 105-residue chain is Translation initiation factor 1A 2 (105 aa).

The segment at 1–22 (MRKRREGSAAPSTQEVTRVRTP) is disordered. The S1-like domain maps to 17–91 (TRVRTPRKEN…TKADVIWKYT (75 aa)).

This sequence belongs to the eIF-1A family.

Seems to be required for maximal rate of protein biosynthesis. Enhances ribosome dissociation into subunits and stabilizes the binding of the initiator Met-tRNA(I) to 40 S ribosomal subunits. In Methanosarcina acetivorans (strain ATCC 35395 / DSM 2834 / JCM 12185 / C2A), this protein is Translation initiation factor 1A 2 (eIF1A2).